The following is a 487-amino-acid chain: Histamine H1 receptor (487 aa).

Residues Met-1–Pro-29 lie on the Extracellular side of the membrane. 2 N-linked (GlcNAc...) asparagine glycosylation sites follow: Asn-5 and Asn-18. A helical transmembrane segment spans residues Leu-30–Tyr-50. At Ala-51–Leu-64 the chain is on the cytoplasmic side. Residues Tyr-65–Leu-89 traverse the membrane as a helical segment. Residues Met-90–Arg-97 lie on the Extracellular side of the membrane. Residues Pro-98 to Ile-123 traverse the membrane as a helical segment. Residues Cys-100 and Cys-180 are joined by a disulfide bond. Histamine-binding residues include Asp-107 and Thr-112. The interval Asp-107 to Thr-112 is important for agonist binding. Over Asp-124–Ala-144 the chain is Cytoplasmic. Phosphothreonine occurs at positions 140 and 142. The helical transmembrane segment at Ser-145–Gly-164 threads the bilayer. The Extracellular segment spans residues Trp-165–Thr-188. A helical transmembrane segment spans residues Trp-189–Ala-211. Histamine is bound at residue Asn-198. Over Lys-212–Gln-416 the chain is Cytoplasmic. The residue at position 230 (Ser-230) is a Phosphoserine. A compositionally biased stretch (basic and acidic residues) spans Lys-238–Lys-261. Positions Lys-238–Gln-291 are disordered. At Thr-279 the chain carries Phosphothreonine. A phosphoserine mark is found at Ser-344 and Ser-347. Residues Glu-345–Gly-379 form a disordered region. Positions Gly-353–Thr-369 are enriched in polar residues. Phosphoserine occurs at positions 380, 396, and 398. Residues Leu-417 to Phe-440 traverse the membrane as a helical segment. The important for agonist binding stretch occupies residues Phe-424–Trp-428. Position 431 (Tyr-431) interacts with histamine. The cysteines at positions 441 and 444 are disulfide-linked. The Extracellular segment spans residues Cys-441–Asn-446. Residues Glu-447–Pro-469 traverse the membrane as a helical segment. The Cytoplasmic segment spans residues Leu-470–Ser-487.

The protein belongs to the G-protein coupled receptor 1 family. In terms of processing, phosphorylation at sites in the second and third cytoplasmic loops independently contribute to agonist-induced receptor down-regulation.

It is found in the cell membrane. Its function is as follows. G-protein-coupled receptor for histamine, a biogenic amine that functions as an immune modulator and a neurotransmitter. Through the H1 receptor, histamine mediates the contraction of smooth muscles and increases capillary permeability due to contraction of terminal venules. Also mediates neurotransmission in the central nervous system and thereby regulates circadian rhythms, emotional and locomotor activities as well as cognitive functions. The sequence is that of Histamine H1 receptor from Homo sapiens (Human).